We begin with the raw amino-acid sequence, 598 residues long: DNA (cytosine-5)-methyltransferase DRM2 (598 aa).

Disordered regions lie at residues 1–49 (MVDW…NGKA) and 114–146 (EVDE…GDED). The UBA 1 domain occupies 42–91 (PQDANGKANGSGALVAEFMGMGFPKEMILKAIKEIGDTDTEQLLELLLTY). The span at 114–128 (EVDEEEDDTNWDEYD) shows a compositional bias: acidic residues. The UBA 2 domain occupies 150–194 (EMSEKDEKMKSLVNMGFPEDEAKMAIDRCGLDAPVAVLVDSIYAS). Residues 227 to 252 (GSKKRKRYGSGPSGNQVPFDGSHEEP) are disordered. Positions 272 to 598 (VHRNLPDQAL…EHVKATMSAV (327 aa)) constitute an SAM-dependent MTase DRM-type domain.

This sequence belongs to the class I-like SAM-binding methyltransferase superfamily. DRM-methyltransferase family. Interacts (via UBA domains) with EIF4A.

Its subcellular location is the nucleus. It carries out the reaction a 2'-deoxycytidine in DNA + S-adenosyl-L-methionine = a 5-methyl-2'-deoxycytidine in DNA + S-adenosyl-L-homocysteine + H(+). Functionally, involved in de novo DNA methylation. Required for CpG and non-CpG methylation. Required for normal establishment and maintenance of RNA-directed DNA methylation (RdDM) mediated by small interfering RNAs (siRNAs). Regulates proper plant development in both vegetative and reproductive stages through DNA methylation. The polypeptide is DNA (cytosine-5)-methyltransferase DRM2 (Oryza sativa subsp. japonica (Rice)).